Reading from the N-terminus, the 662-residue chain is Forkhead box protein O1 (662 aa).

2 disordered regions span residues 1–62 and 122–165; these read MAEA…PSAS and GCLH…SRRN. Threonine 24 is subject to Phosphothreonine; by PKB/AKT1 or PKB/AKT2 and SGK1. Low complexity predominate over residues 33–62; sequence SQSNSATSSPAPSGGAAANPDAAAGLPSAS. Residues 126–146 show a composition bias toward pro residues; the sequence is PAPPQQPPPPGPLSQHPPVPP. The segment at residues 167-261 is a DNA-binding region (fork-head); it reads WGNLSYADLI…KSGKSPRRRA (95 aa). 2 DNA-binding regions span residues 218–225 and 241–244; these read NSIRHNLS and SSWW. A Phosphoserine; by STK4/MST1 modification is found at serine 219. Serine 225, serine 241, and serine 242 each carry phosphoserine. Residues 241–342 form a disordered region; it reads SSWWMLNPEG…GRLSPIMTEQ (102 aa). Residues lysine 252 and lysine 255 each carry the N6-acetyllysine modification. Serine 256 carries the phosphoserine; by CDK1 modification. 2 positions are modified to omega-N-methylarginine; by PRMT1: arginine 258 and arginine 260. Residues 258–260 carry the Nuclear localization signal motif; the sequence is RRR. Residue serine 263 is modified to Phosphoserine; by PKB/AKT1 and SGK1. Residues lysine 269, lysine 272, and lysine 281 each carry the N6-acetyllysine modification. Positions 271 to 282 are enriched in basic residues; it reads AKSRGRAAKKKA. Positions 290 to 570 are sufficient for interaction with NLK; the sequence is GAGDSPGSQF…RLTQEKTALQ (281 aa). A phosphoserine mark is found at serine 294 and serine 305. Positions 316 to 333 are enriched in polar residues; sequence NWSTFRPRTSSNASTISG. At serine 326 the chain carries Phosphoserine; by PKB/AKT1. A Phosphoserine; by CK1 and SGK1 modification is found at serine 329. Serine 332 bears the Phosphoserine; by CK1 mark. Serine 336 carries the phosphoserine; by DYRK1A modification. Residue threonine 340 is modified to Phosphothreonine. Positions 370–466 are required for interaction with RUNX2; sequence SEISNPENME…GGMAQYNCAA (97 aa). Lysine 430 bears the N6-acetyllysine mark. A Required for interaction with SIRT1 motif is present at residues 469–473; that stretch reads LKELL.

In terms of assembly, interacts with LRPPRC. Interacts with RUNX2; the interaction inhibits RUNX2 transcriptional activity and mediates the IGF1/insulin-dependent BGLAP expression in osteoblasts Interacts with PPP2R1A; the interaction regulates the dephosphorylation of FOXO1 at Thr-24 and Ser-263 leading to its nuclear import. Interacts with NLK. Interacts with SIRT1; the interaction results in the deacetylation of FOXO1 leading to activation of FOXO1-mediated transcription of genes involved in DNA repair and stress resistance. Binds to CDK1. Interacts with the 14-3-3 proteins, YWHAG and YWHAZ; the interactions require insulin-stimulated phosphorylation on Thr-24, promote nuclear exit and loss of transcriptional activity. Interacts with SKP2; the interaction ubiquitinates FOXO1 leading to its proteasomal degradation. The interaction requires the presence of KRIT1. Interacts (via the C-terminal half) with ATF4 (via its DNA binding domain); the interaction occurs in osteoblasts, regulates glucose homeostasis via suppression of beta-cell proliferation and subsequent decrease in insulin production. Interacts with PRMT1; the interaction methylates FOXO1, prevents PKB/AKT1 phosphorylation and retains FOXO1 in the nucleus. Interacts with EP300 and CREBBP; the interactions acetylate FOXO1. Interacts with SIRT2; the interaction is disrupted in response to oxidative stress or serum deprivation, leading to increased level of acetylated FOXO1, which promotes stress-induced autophagy by stimulating E1-like activating enzyme ATG7. Interacts (acetylated form) with ATG7; the interaction is increased in response to oxidative stress or serum deprivation and promotes the autophagic process leading to cell death. Interacts (acetylated form) with PPARG. Interacts with XBP1; this interaction is direct and leads to FOXO1 ubiquitination and degradation via the proteasome pathway. Interacts (via the Fork-head domain) with CEBPA; the interaction increases when FOXO1 is deacetylated. Interacts with WDFY2. Forms a complex with WDFY2 and AKT1. Interacts with CRY1. Interacts with PPIA/CYPA; the interaction promotes FOXO1 dephosphorylation, nuclear accumulation and transcriptional activity. Interacts with TOX4; FOXO1 is required for full induction of TOX4-dependent activity and the interaction is inhibited by insulin. Interacts (when phosphorylated on Ser-263) with STUB1/CHIP. Post-translationally, phosphorylation by NLK promotes nuclear export and inhibits the transcriptional activity. In response to growth factors, phosphorylation on Thr-24, Ser-263 and Ser-326 by PKB/AKT1 promotes nuclear export and inactivation of transactivational activity. Phosphorylation on Thr-24 is required for binding 14-3-3 proteins. Phosphorylation of Ser-263 decreases DNA-binding activity and promotes the phosphorylation of Thr-24 and Ser-326, permitting phosphorylation of Ser-329 and Ser-332, probably by CDK1, leading to nuclear exclusion and loss of function. Stress signals, such as response to oxygen or nitric oxide, attenuate the PKB/AKT1-mediated phosphorylation leading to nuclear retention. Phosphorylation of Ser-336 is independent of IGF1 and leads to reduced function. Dephosphorylated on Thr-24 and Ser-263 by PP2A in beta-cells under oxidative stress leading to nuclear retention. Phosphorylation of Ser-256 by CDK1 disrupts binding of 14-3-3 proteins leading to nuclear accumulation and has no effect on DNA binding nor transcriptional activity. Phosphorylation by STK4/MST1 on Ser-219, upon oxidative stress, inhibits binding to 14-3-3 proteins and nuclear export. PPIA/CYPA promotes its dephosphorylation on Ser-263. Ubiquitinated by SKP2. Ubiquitination leads to proteasomal degradation. Ubiquitinated by STUB1/CHIP; when Ser-263 is phosphorylated. In terms of processing, methylation inhibits AKT1-mediated phosphorylation at Ser-263 and is increased by oxidative stress. Post-translationally, acetylated. Acetylation at Lys-269 and Lys-281 are necessary for autophagic cell death induction. Deacetylated by SIRT2 in response to oxidative stress or serum deprivation, thereby negatively regulating FOXO1-mediated autophagic cell death. Once in the nucleus, acetylated by CREBBP/EP300. Acetylation diminishes the interaction with target DNA and attenuates the transcriptional activity. It increases the phosphorylation at Ser-263. Deacetylation by SIRT1 results in reactivation of the transcriptional activity. Oxidative stress by hydrogen peroxide treatment appears to promote deacetylation and uncoupling of insulin-induced phosphorylation. By contrast, resveratrol acts independently of acetylation. Acetylated at Lys-430, promoting its localization to the nucleus and transcription factor activity. Deacetylation at Lys-430 by SIRT6, promotes its translocation into the cytoplasm, preventing its transcription factor activity. Deacetylation and subsequent inhibition by SIRT6 has different effects depending on cell types: it inhibits gluconeogenesis in hepatocytes, promotes glucose sensing in pancreatic beta-cells and regulates lipid catabolism in brown adipocytes. In terms of tissue distribution, highly in subcutaneous adipose and visceral adipose tissues. Levels higher in piglets than in adults. Also expressed at lower levels in liver and muscle.

Its subcellular location is the cytoplasm. The protein localises to the nucleus. In terms of biological role, transcription factor that is the main target of insulin signaling and regulates metabolic homeostasis in response to oxidative stress. Binds to the insulin response element (IRE) with consensus sequence 5'-TT[G/A]TTTTG-3' and the related Daf-16 family binding element (DBE) with consensus sequence 5'-TT[G/A]TTTAC-3'. Activity suppressed by insulin. Main regulator of redox balance and osteoblast numbers and controls bone mass. Orchestrates the endocrine function of the skeleton in regulating glucose metabolism. Also acts as a key regulator of chondrogenic commitment of skeletal progenitor cells in response to lipid availability: when lipids levels are low, translocates to the nucleus and promotes expression of SOX9, which induces chondrogenic commitment and suppresses fatty acid oxidation. Acts synergistically with ATF4 to suppress osteocalcin/BGLAP activity, increasing glucose levels and triggering glucose intolerance and insulin insensitivity. Also suppresses the transcriptional activity of RUNX2, an upstream activator of osteocalcin/BGLAP. Acts as an inhibitor of glucose sensing in pancreatic beta cells by acting as a transcription repressor and suppressing expression of PDX1. In hepatocytes, promotes gluconeogenesis by acting together with PPARGC1A and CEBPA to activate the expression of genes such as IGFBP1, G6PC1 and PCK1. Also promotes gluconeogenesis by directly promoting expression of PPARGC1A and G6PC1. Important regulator of cell death acting downstream of CDK1, PKB/AKT1 and STK4/MST1. Promotes neural cell death. Mediates insulin action on adipose tissue. Regulates the expression of adipogenic genes such as PPARG during preadipocyte differentiation and, adipocyte size and adipose tissue-specific gene expression in response to excessive calorie intake. Regulates the transcriptional activity of GADD45A and repair of nitric oxide-damaged DNA in beta-cells. Required for the autophagic cell death induction in response to starvation or oxidative stress in a transcription-independent manner. Mediates the function of MLIP in cardiomyocytes hypertrophy and cardiac remodeling. Positive regulator of apoptosis in cardiac smooth muscle cells as a result of its transcriptional activation of pro-apoptotic genes. Regulates endothelial cell (EC) viability and apoptosis in a PPIA/CYPA-dependent manner via transcription of CCL2 and BCL2L11 which are involved in EC chemotaxis and apoptosis. This chain is Forkhead box protein O1 (FOXO1), found in Sus scrofa (Pig).